Here is a 319-residue protein sequence, read N- to C-terminus: Thioredoxin reductase (319 aa).

36–48 (EGFMAGGVAAGGQ) is a binding site for FAD. The cysteines at positions 144 and 147 are disulfide-linked. Residue 289–298 (DVQDKVYRQA) coordinates FAD.

This sequence belongs to the class-II pyridine nucleotide-disulfide oxidoreductase family. Homodimer. FAD serves as cofactor.

It carries out the reaction [thioredoxin]-dithiol + NADP(+) = [thioredoxin]-disulfide + NADPH + H(+). The polypeptide is Thioredoxin reductase (trrA) (Dictyostelium discoideum (Social amoeba)).